Consider the following 785-residue polypeptide: MEKKVEAILEFDKIKKQLTEFASSSLGEQAILELAPATDFQVVQKTQLETEEGAKIIRLRGSAPITGLTDVFAHLKRLEIGGDLNGLEIYQIGSNLRVSRQMKNFMNDLLEIGVELPILGALSDELLVLKEVEEDIAISVDESGKVLDTASEALSTIRRTLRRTEDRVREKLESYLRDRNASKMLSDAVITIRNDRYVIPVKQEYKGHYGGIVHDQSASGQTLFIEPQSVVDLNNERKALQAKEKQEIERILAEISASLAAWINEIHHNTFILGRFDFIFAKARFGKAMKAVTPHLSDAGVVHLIAARHPLLDAAKVVANDIYLGEDFTTIVITGPNTGGKTITLKTLGLLTLMAQSGLQIPAQEDSTIAVFEHVFADIGDEQSIEQSLSTFSSHMTNIVSILEKVNQKSLILYDELGAGTDPQEGAALAIAILDASHEKGASVVATTHYPELKAYGYNRVHATNASVEFNVETLSPTYKLLIGVPGRSNAFDISRRLGLSENIITEARSLVDTESADLNDMISSLEEKRNLAETEYEEARELARGADNLLKDLQKEITNYYQQKDKLIEQASEKAATIVEKAEAEAEEIIRELRTMQLNGAAGIKEHELIDAKTRLGNAKPKTINKTIPQAPKQKPHVFQEGDNVRVLSLGQKGTLLNKISDKEWNVQIGIIKMKIKTADLEYIQPEKPKKQRIITSVHSSGSPAKSELDLRGERYEDALQKVDKYLDEALLAGYPQVAIIHGKGTGALRTGVTEYLKNHRMVKSIRFGAAAEGGNGVTIVEFK.

An ATP-binding site is contributed by 335-342; it reads GPNTGGKT. The region spanning 710–785 is the Smr domain; that stretch reads LDLRGERYED…GNGVTIVEFK (76 aa).

Belongs to the DNA mismatch repair MutS family. MutS2 subfamily. Homodimer. Binds to stalled ribosomes, contacting rRNA.

In terms of biological role, endonuclease that is involved in the suppression of homologous recombination and thus may have a key role in the control of bacterial genetic diversity. Functionally, acts as a ribosome collision sensor, splitting the ribosome into its 2 subunits. Detects stalled/collided 70S ribosomes which it binds and splits by an ATP-hydrolysis driven conformational change. Acts upstream of the ribosome quality control system (RQC), a ribosome-associated complex that mediates the extraction of incompletely synthesized nascent chains from stalled ribosomes and their subsequent degradation. Probably generates substrates for RQC. This is Endonuclease MutS2 from Listeria monocytogenes serovar 1/2a (strain ATCC BAA-679 / EGD-e).